We begin with the raw amino-acid sequence, 1040 residues long: Multidrug resistance protein MdtB (1040 aa).

The next 12 membrane-spanning stretches (helical) occupy residues 25 to 45 (LLMAAMLLAGIIGYRFLPVAA), 347 to 367 (LMLAIALVVMIIYLFLRNIPA), 369 to 389 (IIPGVAVPLSLIGTFAVMVFL), 396 to 416 (LTLMALTIATGFVVDDAIVVI), 440 to 460 (IGFTIISLTFSLIAVLIPLLF), 472 to 492 (FAVTLAVAILISAVVSLTLTP), 537 to 557 (WLTLSVAFATLLLSVMLWIVI), 869 to 889 (LIVAAVVAMYIVLGVLYESFI), 890 to 910 (HPITILSTLPTAGVGALLALM), 911 to 931 (IAGSELDIIAIIGIILLIGIV), 968 to 988 (ILMTTLAALLGALPLMLSTGV), and 998 to 1018 (IAMVGGLLVSQILTLFTTPVI).

It belongs to the resistance-nodulation-cell division (RND) (TC 2.A.6) family. MdtB subfamily. In terms of assembly, part of a tripartite efflux system composed of MdtA, MdtB and MdtC. MdtB forms a heteromultimer with MdtC.

It localises to the cell inner membrane. The protein is Multidrug resistance protein MdtB of Salmonella arizonae (strain ATCC BAA-731 / CDC346-86 / RSK2980).